The chain runs to 91 residues: Defensin-like protein 220 (91 aa).

The signal sequence occupies residues 1 to 19; sequence MKTIFFFITFIVLVSSCTS. Cystine bridges form between C61/C78, C64/C83, and C68/C85.

The protein belongs to the DEFL family.

Its subcellular location is the secreted. This Arabidopsis thaliana (Mouse-ear cress) protein is Defensin-like protein 220.